Reading from the N-terminus, the 145-residue chain is D-aminoacyl-tRNA deacylase (145 aa).

Positions 137–138 (GP) match the Gly-cisPro motif, important for rejection of L-amino acids motif.

The protein belongs to the DTD family. In terms of assembly, homodimer.

The protein localises to the cytoplasm. It carries out the reaction glycyl-tRNA(Ala) + H2O = tRNA(Ala) + glycine + H(+). It catalyses the reaction a D-aminoacyl-tRNA + H2O = a tRNA + a D-alpha-amino acid + H(+). Functionally, an aminoacyl-tRNA editing enzyme that deacylates mischarged D-aminoacyl-tRNAs. Also deacylates mischarged glycyl-tRNA(Ala), protecting cells against glycine mischarging by AlaRS. Acts via tRNA-based rather than protein-based catalysis; rejects L-amino acids rather than detecting D-amino acids in the active site. By recycling D-aminoacyl-tRNA to D-amino acids and free tRNA molecules, this enzyme counteracts the toxicity associated with the formation of D-aminoacyl-tRNA entities in vivo and helps enforce protein L-homochirality. This Pseudoalteromonas translucida (strain TAC 125) protein is D-aminoacyl-tRNA deacylase.